The primary structure comprises 205 residues: Recombination protein RecR (205 aa).

The segment at 60 to 75 (CKVCHNISDTETCRIC) adopts a C4-type zinc-finger fold. The Toprim domain occupies 83–178 (STICVVESIR…KLSVIARGIS (96 aa)).

This sequence belongs to the RecR family.

Functionally, may play a role in DNA repair. It seems to be involved in an RecBC-independent recombinational process of DNA repair. It may act with RecF and RecO. This is Recombination protein RecR from Phocaeicola vulgatus (strain ATCC 8482 / DSM 1447 / JCM 5826 / CCUG 4940 / NBRC 14291 / NCTC 11154) (Bacteroides vulgatus).